The following is a 448-amino-acid chain: RING finger protein 44 (448 aa).

An RING-type; atypical zinc finger spans residues 396-437 (CVVCFSDFESRQLLRVLPCNHEFHAKCVDKWLKTNRTCPICR).

The protein is RING finger protein 44 (rnf44) of Danio rerio (Zebrafish).